Here is a 473-residue protein sequence, read N- to C-terminus: Glycine receptor subunit beta-type 4 (473 aa).

The first 19 residues, 1–19 (MHSLFLKILIYSLMQCVLG), serve as a signal peptide directing secretion. Topologically, residues 20–249 (QAEFWDYDEN…EFHVDREITH (230 aa)) are extracellular. Residues N29, N105, and N151 are each glycosylated (N-linked (GlcNAc...) asparagine). A disulfide bond links C166 and C180. A helical membrane pass occupies residues 250-271 (HIIQSYIPTSLIVIISWFSFWL). Residues 272-276 (DVEAV) lie on the Cytoplasmic side of the membrane. A helical membrane pass occupies residues 277–297 (PGRVSLSITTLLTLATQSSAA). Over 298–308 (RMALPQASDVK) the chain is Extracellular. The chain crosses the membrane as a helical span at residues 309–329 (AIDVWMGTCMAFVFSAMIEFT). The Cytoplasmic segment spans residues 330-439 (VVNYCVRRKV…NRKNAQKIDR (110 aa)). The helical transmembrane segment at 440-460 (YSRALFPLAFIIFNIFYWIYY) threads the bilayer. Residues 461–473 (LKYAGSNSPELLL) lie on the Extracellular side of the membrane.

This sequence belongs to the ligand-gated ion channel (TC 1.A.9) family. Glycine receptor (TC 1.A.9.3) subfamily. As to quaternary structure, pentamer.

The protein resides in the postsynaptic cell membrane. Its subcellular location is the synapse. It is found in the cell membrane. Its function is as follows. Glycine receptors are ligand-gated chloride channels. Channel opening is triggered by extracellular glycine. Contributes to the generation of inhibitory postsynaptic currents. This Caenorhabditis elegans protein is Glycine receptor subunit beta-type 4.